We begin with the raw amino-acid sequence, 301 residues long: Helicase VP6-A (301 aa).

Disordered stretches follow at residues 1 to 99 (MIDW…TTGT) and 163 to 208 (RRKE…TSVG). Basic and acidic residues-rich tracts occupy residues 8 to 30 (ESGK…KDGE), 37 to 55 (GQKK…DRRV), and 67 to 81 (GFRE…RGDG). Lysine 82 is an ATP binding site. Composition is skewed to basic and acidic residues over residues 163-177 (RRKE…VAEK) and 186-202 (VHGD…KTPE).

This sequence belongs to the orbivirus VP6 family. In terms of assembly, homohexamer.

It is found in the virion. The enzyme catalyses ATP + H2O = ADP + phosphate + H(+). Its function is as follows. ATP dependent RNA helicase essential for RNA packaging and viral transcription. Possesses ss- and dsRNA-binding capacity. This Bluetongue virus 2 (isolate USA) (BTV 2) protein is Helicase VP6-A (Segment-9).